Here is a 255-residue protein sequence, read N- to C-terminus: Cytochrome c oxidase subunit 3 (255 aa).

7 consecutive transmembrane segments (helical) span residues I12 to L29, L57 to I77, I91 to F111, L126 to I146, Y155 to F175, F196 to M216, and G235 to L255.

It belongs to the cytochrome c oxidase subunit 3 family. As to quaternary structure, component of the cytochrome c oxidase (complex IV, CIV), a multisubunit enzyme composed of a catalytic core of 3 subunits and several supernumerary subunits. The complex exists as a monomer or a dimer and forms supercomplexes (SCs) in the inner mitochondrial membrane with ubiquinol-cytochrome c oxidoreductase (cytochrome b-c1 complex, complex III, CIII).

It is found in the mitochondrion inner membrane. It carries out the reaction 4 Fe(II)-[cytochrome c] + O2 + 8 H(+)(in) = 4 Fe(III)-[cytochrome c] + 2 H2O + 4 H(+)(out). Component of the cytochrome c oxidase, the last enzyme in the mitochondrial electron transport chain which drives oxidative phosphorylation. The respiratory chain contains 3 multisubunit complexes succinate dehydrogenase (complex II, CII), ubiquinol-cytochrome c oxidoreductase (cytochrome b-c1 complex, complex III, CIII) and cytochrome c oxidase (complex IV, CIV), that cooperate to transfer electrons derived from NADH and succinate to molecular oxygen, creating an electrochemical gradient over the inner membrane that drives transmembrane transport and the ATP synthase. Cytochrome c oxidase is the component of the respiratory chain that catalyzes the reduction of oxygen to water. Electrons originating from reduced cytochrome c in the intermembrane space (IMS) are transferred via the dinuclear copper A center (CU(A)) of subunit 2 and heme A of subunit 1 to the active site in subunit 1, a binuclear center (BNC) formed by heme A3 and copper B (CU(B)). The BNC reduces molecular oxygen to 2 water molecules using 4 electrons from cytochrome c in the IMS and 4 protons from the mitochondrial matrix. The protein is Cytochrome c oxidase subunit 3 (MT-CO3) of Theileria annulata.